The primary structure comprises 506 residues: MIFQKRTFFIKRGCVLNIRVRYAPSPTGLQHIGGIRTALFNYFFAKSFNGKFLLRIEDTDQTRYYKEAEEDLYQSLAWLGIDFDEGPTCGGSYSPYIQSQRTEIYRKYAKELIESGNAYYCYCSPDRLERIRKIQTINKMAPGYDRHCRHLNKDEIKDALSLGISPVIRFKIPFDGETSFNDILLGKITWANKDISPDPVILKSDGFPTYHLANVVDDHLMEISHVLRAQEWISSGPLHVLLYNAFRWNPPIYCHLPMVMGSDGQKLSKRHGATALKQFIDDGYLPEAIINYVTLLGWSYDGKSEFFTKNELQKLFSIDKISKSPAVFDYNKLDFFNSHYIRTKEDHELAELLLPFLQKAGYIKKDSNSCDKEKLLLLVPLIKPRIRKLGDAVGMLRFFYTNISTWNLNEFLGKKKTVRDIYLLLEKIKPVLEGFETRILSENEQIFYNFAKENDLKIGEVLLPIRIAVLGSKVSPPLFDSLQLLGKVTVFDRINKAQDFLKKYEL.

Residues P24–G34 carry the 'HIGH' region motif. Zn(2+) contacts are provided by C121, C123, C148, and H150. The 'KMSKS' region signature appears at K266 to R270. Residue K269 coordinates ATP.

Belongs to the class-I aminoacyl-tRNA synthetase family. Glutamate--tRNA ligase type 1 subfamily. Monomer. The cofactor is Zn(2+).

It localises to the cytoplasm. The catalysed reaction is tRNA(Glu) + L-glutamate + ATP = L-glutamyl-tRNA(Glu) + AMP + diphosphate. Functionally, catalyzes the attachment of glutamate to tRNA(Glu) in a two-step reaction: glutamate is first activated by ATP to form Glu-AMP and then transferred to the acceptor end of tRNA(Glu). The sequence is that of Glutamate--tRNA ligase from Borrelia duttonii (strain Ly).